Reading from the N-terminus, the 356-residue chain is Protein SEC13 homolog (356 aa).

6 WD repeats span residues 11 to 50, 54 to 95, 101 to 142, 149 to 205, 210 to 253, and 259 to 298; these read EHEDMVHHAALDFYGLLLATCSSDGSVRIFHSRKNNKALA, GHQG…DWTK, NHDS…GVWD, AHTI…WVEE, AHSD…SEWT, and TFDDAVWSISWSTTGNILAVTGGDNNVTLWKENTEGQWIR. Residues 307–356 form a disordered region; the sequence is IQSKQPSHLPHSHSQQQQALQQHQQQAPSHPGPSSDSEHSSNLSNSQLSN. The segment covering 308 to 356 has biased composition (low complexity); sequence QSKQPSHLPHSHSQQQQALQQHQQQAPSHPGPSSDSEHSSNLSNSQLSN.

It belongs to the WD repeat SEC13 family. As to quaternary structure, probable component of the nuclear pore complex (NPC). Component of the GATOR complex consisting of mio, Nup44A/Seh1, Im11, Nplr3, Nplr2, Wdr24, Wdr59 and Sec13. Within the GATOR complex, probable component of the GATOR2 subcomplex which is likely composed of mio, Nup44A/Seh1, Wdr24, Wdr59 and Sec13. Interacts with msk. Interacts (preferentially when phosphorylated) with Mad. The GATOR2 complex associates with unmet in the absence of S-adenosyl-L-methionine; the mio-Wdr24-Nup44A subcomplex is essential and sufficient for this interaction while Wdr59 and Sec13 are dispensable. This association acts as a nutrient sensor to inhibit mTORC1 signaling in the absence of methionine. In terms of tissue distribution, salivary glands.

Its subcellular location is the nucleus envelope. It localises to the nucleus. The protein localises to the nucleoplasm. It is found in the cytoplasm. The protein resides in the cytoskeleton. Its subcellular location is the microtubule organizing center. It localises to the centrosome. The protein localises to the nuclear pore complex. It is found in the cytoplasmic vesicle. The protein resides in the COPII-coated vesicle membrane. Its subcellular location is the endoplasmic reticulum membrane. It localises to the lysosome membrane. Functions as a component of the nuclear pore complex (NPC) and the COPII coat. At the endoplasmic reticulum, SEC13 is involved in the biogenesis of COPII-coated vesicles. Recruited to transcriptionally active chromatin at the time of transcription initiation by RNA polymerase II. Required for proper expression of ecdysone-responsive genes such as Eip74EF and Eip75B during larval development. Required for reactivation of transcription after heat shock. Required for nuclear import of phosphorylated Mad via importin msk. Has no role in classical nuclear localization signal (cNLS)-dependent nuclear import via importin-beta. In terms of biological role, a component of the GATOR subcomplex GATOR2 which functions as an activator of the amino acid-sensing branch of the mTORC1 signaling pathway. The two GATOR subcomplexes, GATOR1 and GATOR2, regulate the mTORC1 pathway in order to mediate metabolic homeostasis, female gametogenesis and the response to amino acid limitation and complete starvation. GATOR2 activates the mTORC1 signaling pathway through the inhibition of the GATOR1 subcomplex, controlling the switch to cell proliferation and growth under nutrient replete conditions and during female oocyte development. The protein is Protein SEC13 homolog of Drosophila melanogaster (Fruit fly).